A 108-amino-acid polypeptide reads, in one-letter code: MEQFECITVEEAYQKLHQGAAVLVDIRDPQSYAMGHAPQAFHLTNDTLGAFMREHGFDTAVMVMCYHGNSSKGAAQYLLQQGYDAVYSIDGGFEAWHRRFPADVANGA.

The Rhodanese domain occupies histidine 17 to alanine 105. The active-site Cysteine persulfide intermediate is the cysteine 65.

Belongs to the GlpE family.

It localises to the cytoplasm. It carries out the reaction thiosulfate + hydrogen cyanide = thiocyanate + sulfite + 2 H(+). It catalyses the reaction thiosulfate + [thioredoxin]-dithiol = [thioredoxin]-disulfide + hydrogen sulfide + sulfite + 2 H(+). In terms of biological role, transferase that catalyzes the transfer of sulfur from thiosulfate to thiophilic acceptors such as cyanide or dithiols. May function in a CysM-independent thiosulfate assimilation pathway by catalyzing the conversion of thiosulfate to sulfite, which can then be used for L-cysteine biosynthesis. The sequence is that of Thiosulfate sulfurtransferase GlpE from Salmonella choleraesuis (strain SC-B67).